The following is a 409-amino-acid chain: Killer cell lectin-like receptor subfamily G member 2 (409 aa).

The segment at 1–120 is disordered; it reads MEESWEAAPG…GAEPAPSAWA (120 aa). Residues 41–53 are compositionally biased toward low complexity; the sequence is PEGPESSPSPAGA. Residues 72-81 are compositionally biased toward pro residues; that stretch reads SPRPGSPRVP. The segment covering 104–120 has biased composition (low complexity); the sequence is PRNGEAPGAEPAPSAWA. Ser158 carries the post-translational modification Phosphoserine. The tract at residues 193–216 is disordered; that stretch reads TESGCDAEGRASPAEGSAGSPGSP. Residues 202 to 216 are compositionally biased toward low complexity; that stretch reads RASPAEGSAGSPGSP. Residues 263 to 283 form a helical membrane-spanning segment; that stretch reads WALAFMAVLLAVSGVVIVVLA. A C-type lectin domain is found at 300–405; that stretch reads SEEHCYYFSA…CSTPRPWVCA (106 aa). 2 disulfide bridges follow: Cys321/Cys404 and Cys383/Cys396.

The protein localises to the membrane. The sequence is that of Killer cell lectin-like receptor subfamily G member 2 (KLRG2) from Homo sapiens (Human).